A 146-amino-acid polypeptide reads, in one-letter code: 3-dehydroquinate dehydratase (146 aa).

Y24 acts as the Proton acceptor in catalysis. The substrate site is built by N73, H79, and D86. Residue H99 is the Proton donor of the active site. Substrate is bound by residues 100–101 (LS) and R110.

The protein belongs to the type-II 3-dehydroquinase family. As to quaternary structure, homododecamer.

The enzyme catalyses 3-dehydroquinate = 3-dehydroshikimate + H2O. Its pathway is metabolic intermediate biosynthesis; chorismate biosynthesis; chorismate from D-erythrose 4-phosphate and phosphoenolpyruvate: step 3/7. In terms of biological role, catalyzes a trans-dehydration via an enolate intermediate. In Shewanella baltica (strain OS223), this protein is 3-dehydroquinate dehydratase.